A 248-amino-acid chain; its full sequence is N-acylneuraminate-9-phosphatase (248 aa).

D12 is a binding site for Mg(2+). Residues L13, D14, T131, N132, and K164 each contribute to the phosphate site. D14 is a Mg(2+) binding site. D189 serves as a coordination point for Mg(2+).

It belongs to the HAD-like hydrolase superfamily. NANP family. Mg(2+) is required as a cofactor.

It catalyses the reaction N-acetylneuraminate 9-phosphate + H2O = N-acetylneuraminate + phosphate. The enzyme catalyses N-glycoloylneuraminate 9-phosphate + H2O = N-glycoloylneuraminate + phosphate. It functions in the pathway amino-sugar metabolism; N-acetylneuraminate biosynthesis. With respect to regulation, inhibited by calcium. Inhibited by vanadate, sodium orthovanadate and phosphonate. Functionally, catalyzes the dephosphorylation of N-acylneuraminate 9-phosphate (Neu5Ac-9-P) to N-acetylneuraminic acid (Neu5Ac or sialic acid). Can also use N-glycoloylneuraminate 9-phosphate as substrate. The chain is N-acylneuraminate-9-phosphatase from Rattus norvegicus (Rat).